Consider the following 436-residue polypeptide: Glutamyl-tRNA reductase (436 aa).

Substrate is bound by residues 49–52 (TCNR), Ser109, 114–116 (EGQ), and Gln120. Residue Cys50 is the Nucleophile of the active site. Residue 198-203 (GAGRMS) coordinates NADP(+).

This sequence belongs to the glutamyl-tRNA reductase family. As to quaternary structure, homodimer.

The enzyme catalyses (S)-4-amino-5-oxopentanoate + tRNA(Glu) + NADP(+) = L-glutamyl-tRNA(Glu) + NADPH + H(+). The protein operates within porphyrin-containing compound metabolism; protoporphyrin-IX biosynthesis; 5-aminolevulinate from L-glutamyl-tRNA(Glu): step 1/2. Its pathway is porphyrin-containing compound metabolism; chlorophyll biosynthesis. In terms of biological role, catalyzes the NADPH-dependent reduction of glutamyl-tRNA(Glu) to glutamate 1-semialdehyde (GSA). This Prochlorococcus marinus (strain MIT 9215) protein is Glutamyl-tRNA reductase.